A 556-amino-acid polypeptide reads, in one-letter code: MKTDIEIAQEATLQPIMDVARSLGIPENEVELYGNYKAKISLKAFERLKERREGKLILVTAINPTPAGEGKTTTTVGLGDALRRLGKKVVIALREPSLGPSFGVKGGAAGGGYAQIVPMEDINLHFTGDFHAVTSAHNLLAAMLDNSLQQGNPLNIDPRQVVFRRVLDLNDRALRKVIVGLGGRTDGIPRESGFDITVASEIMAILCLSKDLMDLKARCAKIVVAYTYDGKPVTAADLEAQGSMAVLLKDAIKPNLVQTLEHTPAFVHGGPFANIAHGCNSVTATQLALKLGDYCVTEAGFGADLGAEKFFNLKCRLAGLKPDCTVIVATVRALKSHGGVAKADLNRENLEALAKGFGNLEKHIENVAKFGVPAVVAINAFPTDTKAELDYVYERCRQMGIDVALSEVWAKGGEGGRELAEKVVAAIETKPSRFRVLYDSSLPIKEKIAAIVREVYGGDAVAYTPEAEKHIKTFTDLGYGALPVCMAKTQYSLSDDMTKIGRPEGFTVTVREVRLSAGAGFLVVITGAIMTMPGLPKRPAACAIDIDENGRIVGLF.

65-72 (TPAGEGKT) contacts ATP.

Belongs to the formate--tetrahydrofolate ligase family.

It catalyses the reaction (6S)-5,6,7,8-tetrahydrofolate + formate + ATP = (6R)-10-formyltetrahydrofolate + ADP + phosphate. It participates in one-carbon metabolism; tetrahydrofolate interconversion. The sequence is that of Formate--tetrahydrofolate ligase from Heliobacterium modesticaldum (strain ATCC 51547 / Ice1).